A 175-amino-acid chain; its full sequence is Ribosome maturation factor RimM (175 aa).

Positions 98–175 constitute a PRC barrel domain; sequence EGEYYWYQLE…EMRVDWDADF (78 aa).

Belongs to the RimM family. Binds ribosomal protein uS19.

The protein localises to the cytoplasm. An accessory protein needed during the final step in the assembly of 30S ribosomal subunit, possibly for assembly of the head region. Essential for efficient processing of 16S rRNA. May be needed both before and after RbfA during the maturation of 16S rRNA. It has affinity for free ribosomal 30S subunits but not for 70S ribosomes. The protein is Ribosome maturation factor RimM of Pseudomonas paraeruginosa (strain DSM 24068 / PA7) (Pseudomonas aeruginosa (strain PA7)).